A 409-amino-acid polypeptide reads, in one-letter code: Elongation factor Tu, plastid (409 aa).

Residues 10–214 (KPHINIGTIG…KIDSYIPTPI (205 aa)) enclose the tr-type G domain. Residues 19-26 (GHVDHGKT) are G1. 19–26 (GHVDHGKT) contacts GTP. Thr26 provides a ligand contact to Mg(2+). Residues 60–64 (GITIN) are G2. The G3 stretch occupies residues 81–84 (DCPG). Residues 81-85 (DCPGH) and 136-139 (NKED) each bind GTP. Positions 136 to 139 (NKED) are G4. The G5 stretch occupies residues 174 to 176 (SAL).

The protein belongs to the TRAFAC class translation factor GTPase superfamily. Classic translation factor GTPase family. EF-Tu/EF-1A subfamily.

The protein resides in the plastid. The catalysed reaction is GTP + H2O = GDP + phosphate + H(+). Functionally, GTP hydrolase that promotes the GTP-dependent binding of aminoacyl-tRNA to the A-site of ribosomes during protein biosynthesis. The protein is Elongation factor Tu, plastid (tufA) of Euglena longa (Euglenophycean alga).